The sequence spans 168 residues: Auxin-responsive protein IAA1 (168 aa).

Residues M1–V74 form a disordered region. Positions L14–L18 match the EAR-like (transcriptional repression) motif. Positions E23–S34 are enriched in polar residues. Residues V74–G161 enclose the PB1 domain.

The protein belongs to the Aux/IAA family. As to quaternary structure, homodimers and heterodimers. Interacts with the auxin-responsive protein IAA2. Interacts with TPL. Phosphorylated by phytochrome A in vitro. Preferentially expressed in stems, leaves and flowers.

It localises to the nucleus. Aux/IAA proteins are short-lived transcriptional factors that function as repressors of early auxin response genes at low auxin concentrations. Repression is thought to result from the interaction with auxin response factors (ARFs), proteins that bind to the auxin-responsive promoter element (AuxRE). Formation of heterodimers with ARF proteins may alter their ability to modulate early auxin response genes expression. The sequence is that of Auxin-responsive protein IAA1 (IAA1) from Arabidopsis thaliana (Mouse-ear cress).